Reading from the N-terminus, the 171-residue chain is UPF0398 protein MGAS10270_Spy1470 (171 aa).

This sequence belongs to the UPF0398 family.

The protein is UPF0398 protein MGAS10270_Spy1470 of Streptococcus pyogenes serotype M2 (strain MGAS10270).